The sequence spans 845 residues: Protein translocase subunit SecA 1 (845 aa).

Residues Gln91, 109 to 113 (GEGKT), and Asp498 contribute to the ATP site. Residues 795-845 (TDFGTAQHVSAEDGKEKAKKQPIVKGDKVGRNDPCPCGSGKKYKNCHGKEE) are disordered. Zn(2+)-binding residues include Cys829, Cys831, Cys840, and His841. The span at 835 to 845 (KKYKNCHGKEE) shows a compositional bias: basic residues.

Belongs to the SecA family. As to quaternary structure, monomer and homodimer. Part of the essential Sec protein translocation apparatus which comprises SecA, SecYEG and auxiliary proteins SecDF. Other proteins may also be involved. Zn(2+) serves as cofactor.

The protein resides in the cell membrane. It is found in the cytoplasm. The enzyme catalyses ATP + H2O + cellular proteinSide 1 = ADP + phosphate + cellular proteinSide 2.. Functionally, part of the Sec protein translocase complex. Interacts with the SecYEG preprotein conducting channel. Has a central role in coupling the hydrolysis of ATP to the transfer of proteins into and across the cell membrane, serving as an ATP-driven molecular motor driving the stepwise translocation of polypeptide chains across the membrane. The sequence is that of Protein translocase subunit SecA 1 from Staphylococcus haemolyticus (strain JCSC1435).